The sequence spans 424 residues: Phosphoribosylamine--glycine ligase (424 aa).

One can recognise an ATP-grasp domain in the interval 107-313 (KTFMKKYGIP…FLETLLNFYE (207 aa)). 133–194 (VEKVGAPIVV…EEFLEGEEAS (62 aa)) contributes to the ATP binding site. Residues Glu-283 and Asn-285 each contribute to the Mg(2+) site.

This sequence belongs to the GARS family. It depends on Mg(2+) as a cofactor. Mn(2+) serves as cofactor.

It catalyses the reaction 5-phospho-beta-D-ribosylamine + glycine + ATP = N(1)-(5-phospho-beta-D-ribosyl)glycinamide + ADP + phosphate + H(+). It functions in the pathway purine metabolism; IMP biosynthesis via de novo pathway; N(1)-(5-phospho-D-ribosyl)glycinamide from 5-phospho-alpha-D-ribose 1-diphosphate: step 2/2. The protein is Phosphoribosylamine--glycine ligase of Aquifex aeolicus (strain VF5).